Consider the following 360-residue polypeptide: NADH-quinone oxidoreductase subunit H (360 aa).

8 consecutive transmembrane segments (helical) span residues 22–42 (ITVGLVVSVIVKIVIILIPLI), 97–117 (ALFYIGPIMSLAPSFAAWAVI), 130–150 (IGLLYILMITSLSVYGVIIAG), 170–190 (ISYEIAMSAALVCVVMVSGSM), 208–228 (VFSWNWLPLFPIFIVYLISAV), 255–275 (GFAFALFFLAEYIFMILIAAL), 292–312 (WGFIGTPSAFWMFVKMAAVLY), and 336–356 (VLIPIGFAYIVILGVWMISPL).

Belongs to the complex I subunit 1 family. As to quaternary structure, NDH-1 is composed of 14 different subunits. Subunits NuoA, H, J, K, L, M, N constitute the membrane sector of the complex.

The protein resides in the cell inner membrane. The enzyme catalyses a quinone + NADH + 5 H(+)(in) = a quinol + NAD(+) + 4 H(+)(out). NDH-1 shuttles electrons from NADH, via FMN and iron-sulfur (Fe-S) centers, to quinones in the respiratory chain. The immediate electron acceptor for the enzyme in this species is believed to be ubiquinone. Couples the redox reaction to proton translocation (for every two electrons transferred, four hydrogen ions are translocated across the cytoplasmic membrane), and thus conserves the redox energy in a proton gradient. This subunit may bind ubiquinone. This Neisseria meningitidis serogroup C / serotype 2a (strain ATCC 700532 / DSM 15464 / FAM18) protein is NADH-quinone oxidoreductase subunit H.